Here is a 253-residue protein sequence, read N- to C-terminus: Uridine phosphorylase (253 aa).

Belongs to the PNP/UDP phosphorylase family. Homohexamer.

It is found in the cytoplasm. It catalyses the reaction uridine + phosphate = alpha-D-ribose 1-phosphate + uracil. Its pathway is pyrimidine metabolism; UMP biosynthesis via salvage pathway; uracil from uridine (phosphorylase route): step 1/1. Functionally, catalyzes the reversible phosphorylytic cleavage of uridine to uracil and ribose-1-phosphate. Shows weak activity towards deoxyuridine and thymidine. The produced molecules are then utilized as carbon and energy sources or in the rescue of pyrimidine bases for nucleotide synthesis. This chain is Uridine phosphorylase, found in Escherichia coli (strain K12).